We begin with the raw amino-acid sequence, 536 residues long: ATP synthase subunit beta (536 aa).

A disordered region spans residues 1-57 (MVKAVSSSKGAAKVEQKKSAARSGVKKNASKSQASLQDTSSPLKTSSKNAHAKKDVQ). Over residues 30–49 (SKSQASLQDTSSPLKTSSKN) the composition is skewed to polar residues. 208–215 (GGAGVGKT) lines the ATP pocket.

This sequence belongs to the ATPase alpha/beta chains family. F-type ATPases have 2 components, CF(1) - the catalytic core - and CF(0) - the membrane proton channel. CF(1) has five subunits: alpha(3), beta(3), gamma(1), delta(1), epsilon(1). CF(0) has three main subunits: a(1), b(2) and c(9-12). The alpha and beta chains form an alternating ring which encloses part of the gamma chain. CF(1) is attached to CF(0) by a central stalk formed by the gamma and epsilon chains, while a peripheral stalk is formed by the delta and b chains.

Its subcellular location is the cell inner membrane. It carries out the reaction ATP + H2O + 4 H(+)(in) = ADP + phosphate + 5 H(+)(out). In terms of biological role, produces ATP from ADP in the presence of a proton gradient across the membrane. The catalytic sites are hosted primarily by the beta subunits. This chain is ATP synthase subunit beta, found in Bartonella quintana (strain Toulouse) (Rochalimaea quintana).